The primary structure comprises 329 residues: GMP reductase (329 aa).

Catalysis depends on Cys-178, which acts as the Thioimidate intermediate. Residue Val-207–Val-230 participates in NADP(+) binding.

It belongs to the IMPDH/GMPR family. GuaC type 2 subfamily.

The catalysed reaction is IMP + NH4(+) + NADP(+) = GMP + NADPH + 2 H(+). Functionally, catalyzes the irreversible NADPH-dependent deamination of GMP to IMP. It functions in the conversion of nucleobase, nucleoside and nucleotide derivatives of G to A nucleotides, and in maintaining the intracellular balance of A and G nucleotides. This Lactococcus lactis subsp. cremoris (strain MG1363) protein is GMP reductase.